We begin with the raw amino-acid sequence, 397 residues long: S-adenosylmethionine synthase (397 aa).

His16 provides a ligand contact to ATP. Asp18 contributes to the Mg(2+) binding site. Residue Glu44 coordinates K(+). L-methionine-binding residues include Glu57 and Gln100. The interval 100–110 (QSPDIAQGVDN) is flexible loop. ATP is bound by residues 175–177 (DGK), 242–243 (RF), Asp251, 257–258 (RK), Ala274, and Lys278. Asp251 contacts L-methionine. Lys282 lines the L-methionine pocket.

This sequence belongs to the AdoMet synthase family. Homotetramer; dimer of dimers. Mg(2+) is required as a cofactor. The cofactor is K(+).

Its subcellular location is the cytoplasm. It carries out the reaction L-methionine + ATP + H2O = S-adenosyl-L-methionine + phosphate + diphosphate. Its pathway is amino-acid biosynthesis; S-adenosyl-L-methionine biosynthesis; S-adenosyl-L-methionine from L-methionine: step 1/1. Its function is as follows. Catalyzes the formation of S-adenosylmethionine (AdoMet) from methionine and ATP. The overall synthetic reaction is composed of two sequential steps, AdoMet formation and the subsequent tripolyphosphate hydrolysis which occurs prior to release of AdoMet from the enzyme. The chain is S-adenosylmethionine synthase from Leifsonia xyli subsp. xyli (strain CTCB07).